The primary structure comprises 232 residues: MEKSRIIIALDYPNEEQALSLVRQLDPAQCRLKVGKELFTRAGPSLVKRLAAQGFPIFLDLKFHDIPHTVARACLAAADLGVWMLNIHALGGLSMMKAAQEALANHPSHPQLIAVTVLTSMDQAALSQIGLAGTPEDNVLQLALLTQEAGLDGIVCSGQEAPALRQTLGKEFLLVTPGIRPAGAAPKDQQRVLTPREALAKGANYLVIGRPITAAPDPMMALRAIEAEISNV.

Substrate is bound by residues Asp11, Lys33, 60–69 (DLKFHDIPHT), Thr119, Arg180, Gln189, Gly209, and Arg210. Residue Lys62 is the Proton donor of the active site.

The protein belongs to the OMP decarboxylase family. Type 1 subfamily. Homodimer.

The catalysed reaction is orotidine 5'-phosphate + H(+) = UMP + CO2. Its pathway is pyrimidine metabolism; UMP biosynthesis via de novo pathway; UMP from orotate: step 2/2. In terms of biological role, catalyzes the decarboxylation of orotidine 5'-monophosphate (OMP) to uridine 5'-monophosphate (UMP). This is Orotidine 5'-phosphate decarboxylase from Nitrosococcus oceani (strain ATCC 19707 / BCRC 17464 / JCM 30415 / NCIMB 11848 / C-107).